The primary structure comprises 387 residues: N-acetyldiaminopimelate deacetylase (387 aa).

Residue Asp75 is part of the active site. Glu134 (proton acceptor) is an active-site residue.

This sequence belongs to the peptidase M20A family. N-acetyldiaminopimelate deacetylase subfamily.

It catalyses the reaction N-acetyl-(2S,6S)-2,6-diaminopimelate + H2O = (2S,6S)-2,6-diaminopimelate + acetate. Its pathway is amino-acid biosynthesis; L-lysine biosynthesis via DAP pathway; LL-2,6-diaminopimelate from (S)-tetrahydrodipicolinate (acetylase route): step 3/3. Its function is as follows. Catalyzes the conversion of N-acetyl-diaminopimelate to diaminopimelate and acetate. The chain is N-acetyldiaminopimelate deacetylase from Leuconostoc citreum (strain KM20).